The primary structure comprises 721 residues: Peptide-N(4)-(N-acetyl-beta-glucosaminyl)asparagine amidase (721 aa).

Zn(2+) contacts are provided by C193, C196, C225, and C228. C251 acts as the Nucleophile in catalysis. Residues H278 and D295 contribute to the active site.

Belongs to the transglutaminase-like superfamily. PNGase family. Zn(2+) is required as a cofactor.

It localises to the cytoplasm. It carries out the reaction Hydrolysis of an N(4)-(acetyl-beta-D-glucosaminyl)asparagine residue in which the glucosamine residue may be further glycosylated, to yield a (substituted) N-acetyl-beta-D-glucosaminylamine and a peptide containing an aspartate residue.. Specifically deglycosylates the denatured form of N-linked glycoproteins in the cytoplasm and assists their proteasome-mediated degradation. Cleaves the beta-aspartyl-glucosamine (GlcNAc) of the glycan and the amide side chain of Asn, converting Asn to Asp. Prefers proteins containing high-mannose over those bearing complex type oligosaccharides. Can recognize misfolded proteins in the endoplasmic reticulum that are exported to the cytosol to be destroyed and deglycosylate them, while it has no activity toward native proteins. Deglycosylation is a prerequisite for subsequent proteasome-mediated degradation of some, but not all, misfolded glycoproteins. This is Peptide-N(4)-(N-acetyl-beta-glucosaminyl)asparagine amidase (PNG1) from Arabidopsis thaliana (Mouse-ear cress).